The chain runs to 115 residues: NADH-ubiquinone oxidoreductase chain 3 (115 aa).

Transmembrane regions (helical) follow at residues 3–23 (IMIT…IAFW), 55–75 (FFLV…LLPL), and 87–107 (MLTT…YEWL).

It belongs to the complex I subunit 3 family. Core subunit of respiratory chain NADH dehydrogenase (Complex I) which is composed of 45 different subunits. Interacts with TMEM186. Interacts with TMEM242.

The protein localises to the mitochondrion inner membrane. The enzyme catalyses a ubiquinone + NADH + 5 H(+)(in) = a ubiquinol + NAD(+) + 4 H(+)(out). In terms of biological role, core subunit of the mitochondrial membrane respiratory chain NADH dehydrogenase (Complex I) which catalyzes electron transfer from NADH through the respiratory chain, using ubiquinone as an electron acceptor. Essential for the catalytic activity of complex I. This is NADH-ubiquinone oxidoreductase chain 3 from Dasypus novemcinctus (Nine-banded armadillo).